We begin with the raw amino-acid sequence, 158 residues long: SsrA-binding protein (158 aa).

It belongs to the SmpB family.

It localises to the cytoplasm. Its function is as follows. Required for rescue of stalled ribosomes mediated by trans-translation. Binds to transfer-messenger RNA (tmRNA), required for stable association of tmRNA with ribosomes. tmRNA and SmpB together mimic tRNA shape, replacing the anticodon stem-loop with SmpB. tmRNA is encoded by the ssrA gene; the 2 termini fold to resemble tRNA(Ala) and it encodes a 'tag peptide', a short internal open reading frame. During trans-translation Ala-aminoacylated tmRNA acts like a tRNA, entering the A-site of stalled ribosomes, displacing the stalled mRNA. The ribosome then switches to translate the ORF on the tmRNA; the nascent peptide is terminated with the 'tag peptide' encoded by the tmRNA and targeted for degradation. The ribosome is freed to recommence translation, which seems to be the essential function of trans-translation. This chain is SsrA-binding protein, found in Bartonella quintana (strain Toulouse) (Rochalimaea quintana).